The chain runs to 645 residues: 1-deoxy-D-xylulose-5-phosphate synthase 1 (645 aa).

Thiamine diphosphate contacts are provided by residues histidine 79 and 120 to 122; that span reads GHS. Aspartate 151 contacts Mg(2+). Residues 152 to 153, asparagine 180, tyrosine 291, and glutamate 373 each bind thiamine diphosphate; that span reads GS. Asparagine 180 provides a ligand contact to Mg(2+).

The protein belongs to the transketolase family. DXPS subfamily. As to quaternary structure, homodimer. Mg(2+) is required as a cofactor. It depends on thiamine diphosphate as a cofactor.

The catalysed reaction is D-glyceraldehyde 3-phosphate + pyruvate + H(+) = 1-deoxy-D-xylulose 5-phosphate + CO2. It participates in metabolic intermediate biosynthesis; 1-deoxy-D-xylulose 5-phosphate biosynthesis; 1-deoxy-D-xylulose 5-phosphate from D-glyceraldehyde 3-phosphate and pyruvate: step 1/1. Functionally, catalyzes the acyloin condensation reaction between C atoms 2 and 3 of pyruvate and glyceraldehyde 3-phosphate to yield 1-deoxy-D-xylulose-5-phosphate (DXP). In Rhodospirillum rubrum (strain ATCC 11170 / ATH 1.1.1 / DSM 467 / LMG 4362 / NCIMB 8255 / S1), this protein is 1-deoxy-D-xylulose-5-phosphate synthase 1.